The primary structure comprises 224 residues: Transmembrane protein C16orf54 (224 aa).

Thr-4 carries O-linked (GalNAc...) threonine glycosylation. The helical transmembrane segment at 32 to 52 threads the bilayer; it reads IPIMLVLATLAALFILTTAVL. Disordered regions lie at residues 104–138 and 152–203; these read TDRAPEPPTQVGTLEARATAPPAPSAPNSAPSNLG and WGPQ…GLQP. Residues Thr-112 and Thr-116 each carry the phosphothreonine modification. At Ser-194 the chain carries Phosphoserine.

O-glycosylated with core 1 or possibly core 8 glycans.

The protein localises to the membrane. The chain is Transmembrane protein C16orf54 (C16orf54) from Homo sapiens (Human).